Here is an 880-residue protein sequence, read N- to C-terminus: Leucine--tRNA ligase (880 aa).

Positions 46 to 56 match the 'HIGH' region motif; sequence PYPSGALHMGH. The 'KMSKS' region motif lies at 638-642; that stretch reads KMSKS. An ATP-binding site is contributed by Lys641.

The protein belongs to the class-I aminoacyl-tRNA synthetase family.

Its subcellular location is the cytoplasm. It catalyses the reaction tRNA(Leu) + L-leucine + ATP = L-leucyl-tRNA(Leu) + AMP + diphosphate. The sequence is that of Leucine--tRNA ligase from Xanthomonas oryzae pv. oryzae (strain MAFF 311018).